A 206-amino-acid chain; its full sequence is Protein GrpE (206 aa).

The span at 1-18 shows a compositional bias: basic and acidic residues; the sequence is MNNEDKKLQDEQLQKETV. Positions 1–21 are disordered; it reads MNNEDKKLQDEQLQKETVEAA.

It belongs to the GrpE family. As to quaternary structure, homodimer.

It is found in the cytoplasm. Functionally, participates actively in the response to hyperosmotic and heat shock by preventing the aggregation of stress-denatured proteins, in association with DnaK and GrpE. It is the nucleotide exchange factor for DnaK and may function as a thermosensor. Unfolded proteins bind initially to DnaJ; upon interaction with the DnaJ-bound protein, DnaK hydrolyzes its bound ATP, resulting in the formation of a stable complex. GrpE releases ADP from DnaK; ATP binding to DnaK triggers the release of the substrate protein, thus completing the reaction cycle. Several rounds of ATP-dependent interactions between DnaJ, DnaK and GrpE are required for fully efficient folding. This chain is Protein GrpE, found in Photobacterium profundum (strain SS9).